A 500-amino-acid chain; its full sequence is MAFRLKSDVRLAGSWLCLRGARALGTRAVTASKASVLPFEVIPQHQGNKRQRVLQFWKEQNHDDLHLEMHQTFQELGPIFRCDVGSTRIVAVMLPEDCARLHQAESPYPHRMHLEPWMAYREHRRQNLGVFLLNGPEWLSNRRWLNPNVLSPKAVQNLLPMVDTVARDFSEALKQKVLQSAQGSLTMDMQPDIHKYTVEVSNFALFGERLGLFGCNPSSQSLKFIHALEAVFKTTTQLMFLPRSLSRWMRSQAWKEHFEAWDYISEYAENRIQKKYEELARGCSQYNSIVANLMLQGNLPLRAMKANIMDLVAGSVDTTALPLMMTLFELARNPTVQQALRQESMATEPNIYENPQRLRMELPLLWAAIKETLRMYPVGLFLERFLTSPLVLQNYHIPAGTLVHLNLYSMGRNPEVFLSPEHYNPQRWLENKETYKHLAFGFGVRQCIGRRLAEVEMLLFLHHVLKSFCVETAFQEDVKFAYRFVMMPTSAPLLTFRPVS.

Residues 1–24 (MAFRLKSDVRLAGSWLCLRGARAL) constitute a mitochondrion transit peptide. Cysteine 447 contacts heme.

Belongs to the cytochrome P450 family. It depends on heme as a cofactor.

Its subcellular location is the mitochondrion inner membrane. It carries out the reaction a steroid + 2 reduced [adrenodoxin] + O2 + 2 H(+) = an 11beta-hydroxysteroid + 2 oxidized [adrenodoxin] + H2O. It catalyses the reaction 11-deoxycortisol + 2 reduced [adrenodoxin] + O2 + 2 H(+) = cortisol + 2 oxidized [adrenodoxin] + H2O. The enzyme catalyses 21-hydroxyprogesterone + 2 reduced [adrenodoxin] + O2 + 2 H(+) = corticosterone + 2 oxidized [adrenodoxin] + H2O. The catalysed reaction is 21-hydroxyprogesterone + 2 reduced [adrenodoxin] + O2 + 2 H(+) = 18-hydroxy-11-deoxycorticosterone + 2 oxidized [adrenodoxin] + H2O. It carries out the reaction 21-hydroxyprogesterone + 2 reduced [adrenodoxin] + O2 + 2 H(+) = 19-hydroxy-11-deoxycorticosterone + 2 oxidized [adrenodoxin] + H2O. It catalyses the reaction cortisol + 2 reduced [adrenodoxin] + O2 + 2 H(+) = 18-hydroxycortisol + 2 oxidized [adrenodoxin] + H2O. The enzyme catalyses 11-deoxycortisol + 2 reduced [adrenodoxin] + O2 + 2 H(+) = 18-hydroxy-11-deoxycortisol + 2 oxidized [adrenodoxin] + H2O. The protein operates within steroid biosynthesis; glucocorticoid biosynthesis. It functions in the pathway steroid hormone biosynthesis. Functionally, a cytochrome P450 monooxygenase involved in the biosynthesis of adrenal corticoids. Catalyzes a variety of reactions that are essential for many species, including detoxification, defense, and the formation of endogenous chemicals like steroid hormones. Steroid 11beta, 18- and 19-hydroxylase with preferred regioselectivity at 11beta, then 18, and lastly 19. Catalyzes the hydroxylation of 11-deoxycortisol and 11-deoxycorticosterone (21-hydroxyprogesterone) at 11beta position, yielding cortisol or corticosterone, respectively, but cannot produce aldosterone. Mechanistically, uses molecular oxygen inserting one oxygen atom into a substrate for hydroxylation and reducing the second into a water molecule. Two electrons are provided by NADPH via a two-protein mitochondrial transfer system comprising flavoprotein FDXR (adrenodoxin/ferredoxin reductase) and nonheme iron-sulfur protein FDX1 or FDX2 (adrenodoxin/ferredoxin). Due to its lack of 18-oxidation activity, it is incapable of generating aldosterone. Could also be involved in the androgen metabolic pathway. The protein is Cytochrome P450 11B1, mitochondrial (CYP11B1) of Cavia porcellus (Guinea pig).